The primary structure comprises 102 residues: Co-chaperonin GroES (102 aa).

Belongs to the GroES chaperonin family. In terms of assembly, heptamer of 7 subunits arranged in a ring. Interacts with the chaperonin GroEL.

It localises to the cytoplasm. In terms of biological role, together with the chaperonin GroEL, plays an essential role in assisting protein folding. The GroEL-GroES system forms a nano-cage that allows encapsulation of the non-native substrate proteins and provides a physical environment optimized to promote and accelerate protein folding. GroES binds to the apical surface of the GroEL ring, thereby capping the opening of the GroEL channel. This is Co-chaperonin GroES from Chlamydia felis (strain Fe/C-56) (Chlamydophila felis).